A 539-amino-acid polypeptide reads, in one-letter code: GMP synthase [glutamine-hydrolyzing] (539 aa).

In terms of domain architecture, Glutamine amidotransferase type-1 spans 4–202; sequence KILILDFGSQ…VLGICRAKAD (199 aa). Cys81 (nucleophile) is an active-site residue. Catalysis depends on residues His176 and Glu178. Residues 203–395 form the GMPS ATP-PPase domain; it reads WVMKDHIEEA…LGLPPEMVYR (193 aa). 230 to 236 is an ATP binding site; that stretch reads SGGVDSS.

Homodimer.

It catalyses the reaction XMP + L-glutamine + ATP + H2O = GMP + L-glutamate + AMP + diphosphate + 2 H(+). Its pathway is purine metabolism; GMP biosynthesis; GMP from XMP (L-Gln route): step 1/1. Its function is as follows. Catalyzes the synthesis of GMP from XMP. The polypeptide is GMP synthase [glutamine-hydrolyzing] (Cupriavidus pinatubonensis (strain JMP 134 / LMG 1197) (Cupriavidus necator (strain JMP 134))).